Consider the following 179-residue polypeptide: Cell division protein ZapC (179 aa).

The protein belongs to the ZapC family. In terms of assembly, interacts directly with FtsZ.

It is found in the cytoplasm. Its function is as follows. Contributes to the efficiency of the cell division process by stabilizing the polymeric form of the cell division protein FtsZ. Acts by promoting interactions between FtsZ protofilaments and suppressing the GTPase activity of FtsZ. This Ferrimonas balearica (strain DSM 9799 / CCM 4581 / KCTC 23876 / PAT) protein is Cell division protein ZapC.